A 201-amino-acid chain; its full sequence is Small ribosomal subunit protein uS4c (201 aa).

The tract at residues leucine 15–glutamine 43 is disordered. The S4 RNA-binding domain occupies methionine 89–asparagine 150.

It belongs to the universal ribosomal protein uS4 family. As to quaternary structure, part of the 30S ribosomal subunit. Contacts protein S5. The interaction surface between S4 and S5 is involved in control of translational fidelity.

The protein localises to the plastid. Its subcellular location is the chloroplast. In terms of biological role, one of the primary rRNA binding proteins, it binds directly to 16S rRNA where it nucleates assembly of the body of the 30S subunit. Functionally, with S5 and S12 plays an important role in translational accuracy. This Liriodendron tulipifera (Tuliptree) protein is Small ribosomal subunit protein uS4c (rps4).